A 163-amino-acid polypeptide reads, in one-letter code: Epithelial membrane protein 3 (163 aa).

Residues 4 to 24 (LLLVVSALHILILVLLFVATL) traverse the membrane as a helical segment. Residues N46 and N56 are each glycosylated (N-linked (GlcNAc...) asparagine). 3 helical membrane passes run 66-86 (VQAL…LFMF), 100-120 (TGLC…IYAI), and 139-159 (FALA…YIHL).

Belongs to the PMP-22/EMP/MP20 family.

The protein localises to the membrane. Functionally, probably involved in cell proliferation and cell-cell interactions. The polypeptide is Epithelial membrane protein 3 (Emp3) (Mus musculus (Mouse)).